We begin with the raw amino-acid sequence, 379 residues long: Pre-mRNA-processing protein 45 (379 aa).

A compositionally biased stretch (pro residues) spans 1 to 10 (MFSNRLPPPK). 2 disordered regions span residues 1–22 (MFSN…ALSS) and 353–379 (SEGA…NYGA). Residues 368 to 379 (AESDDKSDNYGA) show a composition bias toward basic and acidic residues.

Belongs to the SNW family. As to quaternary structure, belongs to the CWC complex (or CEF1-associated complex), a spliceosome sub-complex reminiscent of a late-stage spliceosome composed of the U2, U5 and U6 snRNAs and at least BUD13, BUD31, BRR2, CDC40, CEF1, CLF1, CUS1, CWC2, CWC15, CWC21, CWC22, CWC23, CWC24, CWC25, CWC27, ECM2, HSH155, IST3, ISY1, LEA1, MSL1, NTC20, PRP8, PRP9, PRP11, PRP19, PRP21, PRP22, PRP45, PRP46, SLU7, SMB1, SMD1, SMD2, SMD3, SMX2, SMX3, SNT309, SNU114, SPP2, SYF1, SYF2, RSE1 and YJU2. Interacts with CLF1, PRP22 and PRP46. Interacts with SPP382.

The protein localises to the nucleus. Functionally, involved in pre-mRNA splicing. Associated with the spliceosome throughout the splicing reactions, until after the second catalytic step. The sequence is that of Pre-mRNA-processing protein 45 (PRP45) from Saccharomyces cerevisiae (strain ATCC 204508 / S288c) (Baker's yeast).